A 320-amino-acid chain; its full sequence is Uridine phosphorylase 2 (320 aa).

Residues glycine 66, arginine 100, and 144-147 (RIGT) contribute to the phosphate site. A disulfide bridge connects residues cysteine 95 and cysteine 102. Residues 148-149 (SG) and 223-225 (QGR) each bind uridine.

It belongs to the PNP/UDP phosphorylase family. As to quaternary structure, homodimer. Liver specific.

The catalysed reaction is uridine + phosphate = alpha-D-ribose 1-phosphate + uracil. It catalyses the reaction 2'-deoxyuridine + phosphate = 2-deoxy-alpha-D-ribose 1-phosphate + uracil. It functions in the pathway pyrimidine metabolism; UMP biosynthesis via salvage pathway; uracil from uridine (phosphorylase route): step 1/1. Its activity is regulated as follows. A conditional disulfide bridge can form within the protein that dislocates a critical phosphate-coordinating arginine Arg-100 away from the active site, disabling the enzyme. Its function is as follows. Catalyzes the reversible phosphorylytic cleavage of uridine to uracil and ribose-1-phosphate which can then be utilized as carbon and energy sources or in the rescue of pyrimidine bases for nucleotide synthesis. Shows broad substrate specificity and can also accept deoxyuridine and other analogous compounds. The chain is Uridine phosphorylase 2 from Mus musculus (Mouse).